We begin with the raw amino-acid sequence, 94 residues long: Co-chaperonin GroES (94 aa).

Belongs to the GroES chaperonin family. In terms of assembly, heptamer of 7 subunits arranged in a ring. Interacts with the chaperonin GroEL.

It localises to the cytoplasm. Its function is as follows. Together with the chaperonin GroEL, plays an essential role in assisting protein folding. The GroEL-GroES system forms a nano-cage that allows encapsulation of the non-native substrate proteins and provides a physical environment optimized to promote and accelerate protein folding. GroES binds to the apical surface of the GroEL ring, thereby capping the opening of the GroEL channel. The sequence is that of Co-chaperonin GroES from Lactococcus lactis subsp. cremoris (strain SK11).